Reading from the N-terminus, the 900-residue chain is Iodate reductase subunit IdrA (900 aa).

The tract at residues 1–21 (MSENIKQGGAGTFMQAPQDSV) is disordered. [3Fe-4S] cluster-binding residues include cysteine 35, cysteine 38, and cysteine 42.

Belongs to the prokaryotic molybdopterin-containing oxidoreductase family. As to quaternary structure, the iodate reductase (Idr) complex is composed of a molybdopterin-dependent iodate reductase (IdrA and IdrB subunits) and two associated peroxidases (IdrP1 and IdrP2). [3Fe-4S] cluster serves as cofactor. Requires Mo-bis(molybdopterin guanine dinucleotide) as cofactor.

It localises to the periplasm. Functionally, involved in iodate respiration. May accept electrons from cytochrome c551, and catalyze the reduction of iodate (IO(3)(-)) to produce the chemically unstable intermediate hypoiodous acid (HIO). This intermediate then undergoes abiotic disproportionation to yield two molecules of iodide (I(-)) and one molecule of iodate. The resultant iodate subsequently cycles back into the reductive pathway. The initial reduction of iodate may inadvertently produce low levels of incidental toxic H(2)O(2), which is detoxified by IdrP1 and IdrP2. The sequence is that of Iodate reductase subunit IdrA from Denitromonas iodatirespirans.